The chain runs to 271 residues: Regulatory protein RecX (271 aa).

It belongs to the RecX family.

The protein resides in the cytoplasm. Modulates RecA activity. This chain is Regulatory protein RecX, found in Lactobacillus gasseri (strain ATCC 33323 / DSM 20243 / BCRC 14619 / CIP 102991 / JCM 1131 / KCTC 3163 / NCIMB 11718 / NCTC 13722 / AM63).